Consider the following 289-residue polypeptide: NFIL3 like protein (289 aa).

Residues 1–27 are disordered; that stretch reads MDVGFSGLPDVSQSHSKTLWGARGRGP. The 64-residue stretch at 42-105 folds into the bZIP domain; it reads DTVYWEKRRK…GLLPLTGGPR (64 aa). Residues 48–64 form a basic motif region; sequence KRRKNNEAAKRSREKRR. Residues 70-91 are leucine-zipper; the sequence is IEGRLAALMEENALLKGELKAL.

Belongs to the bZIP family. NFIL3 subfamily.

It localises to the nucleus. The protein is NFIL3 like protein of Homo sapiens (Human).